A 242-amino-acid polypeptide reads, in one-letter code: Acetoacetyl-CoA reductase (242 aa).

Residues 12–14 (RGI) and 82–86 (NAGIT) each bind NADP(+). Residues D88 and 141-144 (QAGQ) each bind substrate. The Proton acceptor role is filled by Y147. 177 to 180 (PGYI) provides a ligand contact to NADP(+). Residue 178–179 (GY) coordinates substrate.

It belongs to the short-chain dehydrogenases/reductases (SDR) family.

Its subcellular location is the cytoplasm. It catalyses the reaction a (3R)-3-hydroxyacyl-CoA + NADP(+) = a 3-oxoacyl-CoA + NADPH + H(+). The protein operates within biopolymer metabolism; poly-(R)-3-hydroxybutanoate biosynthesis. The protein is Acetoacetyl-CoA reductase (phaB) of Paracoccus denitrificans.